The following is a 271-amino-acid chain: S-adenosylmethionine decarboxylase proenzyme (271 aa).

Ser-121 functions as the Schiff-base intermediate with substrate; via pyruvic acid in the catalytic mechanism. Ser-121 carries the pyruvic acid (Ser); by autocatalysis modification. The Proton acceptor; for processing activity role is filled by His-126. Cys-149 acts as the Proton donor; for catalytic activity in catalysis.

The protein belongs to the prokaryotic AdoMetDC family. Type 2 subfamily. As to quaternary structure, heterooctamer of four alpha and four beta chains arranged as a tetramer of alpha/beta heterodimers. It depends on pyruvate as a cofactor. Is synthesized initially as an inactive proenzyme. Formation of the active enzyme involves a self-maturation process in which the active site pyruvoyl group is generated from an internal serine residue via an autocatalytic post-translational modification. Two non-identical subunits are generated from the proenzyme in this reaction, and the pyruvate is formed at the N-terminus of the alpha chain, which is derived from the carboxyl end of the proenzyme. The post-translation cleavage follows an unusual pathway, termed non-hydrolytic serinolysis, in which the side chain hydroxyl group of the serine supplies its oxygen atom to form the C-terminus of the beta chain, while the remainder of the serine residue undergoes an oxidative deamination to produce ammonia and the pyruvoyl group blocking the N-terminus of the alpha chain.

It carries out the reaction S-adenosyl-L-methionine + H(+) = S-adenosyl 3-(methylsulfanyl)propylamine + CO2. It functions in the pathway amine and polyamine biosynthesis; S-adenosylmethioninamine biosynthesis; S-adenosylmethioninamine from S-adenosyl-L-methionine: step 1/1. Functionally, catalyzes the decarboxylation of S-adenosylmethionine to S-adenosylmethioninamine (dcAdoMet), the propylamine donor required for the synthesis of the polyamines spermine and spermidine from the diamine putrescine. The protein is S-adenosylmethionine decarboxylase proenzyme of Clostridium perfringens (strain ATCC 13124 / DSM 756 / JCM 1290 / NCIMB 6125 / NCTC 8237 / Type A).